A 265-amino-acid polypeptide reads, in one-letter code: Orotidine 5'-phosphate decarboxylase (265 aa).

Substrate-binding positions include Asp-38, 60–62 (KTH), 91–100 (DRKFADIGNT), Tyr-213, and Arg-232. Lys-93 (proton donor) is an active-site residue.

It belongs to the OMP decarboxylase family.

It catalyses the reaction orotidine 5'-phosphate + H(+) = UMP + CO2. It participates in pyrimidine metabolism; UMP biosynthesis via de novo pathway; UMP from orotate: step 2/2. The polypeptide is Orotidine 5'-phosphate decarboxylase (pyrG) (Mucor circinelloides f. lusitanicus (Mucor racemosus var. lusitanicus)).